The chain runs to 310 residues: D-alanyl-D-alanine endopeptidase (310 aa).

A signal peptide spans Met1 to Ala23. Catalysis depends on Ser66, which acts as the Acyl-ester intermediate. Lys69 serves as the catalytic Proton acceptor. Ser123 is a catalytic residue. Lys230 is a substrate binding site.

The protein belongs to the peptidase S11 family.

It localises to the periplasm. Functionally, cell wall formation. The protein is D-alanyl-D-alanine endopeptidase (pbpG) of Pseudomonas aeruginosa (strain ATCC 15692 / DSM 22644 / CIP 104116 / JCM 14847 / LMG 12228 / 1C / PRS 101 / PAO1).